The following is a 949-amino-acid chain: MAM domain-containing glycosylphosphatidylinositol anchor protein 1 (949 aa).

A signal peptide spans 1 to 18 (MEMICVLFLSLVPAYSRG). Ig-like domains follow at residues 24-125 (PAQA…IRVD) and 132-230 (PVLT…KSIT). Asparagine 42 and asparagine 90 each carry an N-linked (GlcNAc...) asparagine glycan. Disulfide bonds link cysteine 60–cysteine 108 and cysteine 157–cysteine 214. N-linked (GlcNAc...) asparagine glycans are attached at residues asparagine 235, asparagine 247, asparagine 257, asparagine 292, asparagine 307, and asparagine 331. Residues 240-323 (PALKLSVNET…VGNPAKKTVN (84 aa)) form the Ig-like 3 domain. Cysteine 262 and cysteine 308 are disulfide-bonded. 3 consecutive Ig-like domains span residues 338-432 (PDVI…VEVN), 440-531 (PTIS…ALVQ), and 537-625 (PPVV…FQVS). A disulfide bridge links cysteine 357 with cysteine 415. An N-linked (GlcNAc...) asparagine glycan is attached at asparagine 432. Disulfide bonds link cysteine 463-cysteine 513 and cysteine 559-cysteine 609. N-linked (GlcNAc...) asparagine glycosylation is found at asparagine 577, asparagine 649, and asparagine 820. Positions 637 to 737 (TPNPTLSQKQ…ARIIRYMEPI (101 aa)) constitute a Fibronectin type-III domain. The region spanning 745–912 (NTCRFEDEKI…VTLKKGDCPR (168 aa)) is the MAM domain. Serine 926 carries GPI-anchor amidated serine lipidation. Residues 927–949 (GVSAQHGPCLCGPLTFFLYVLLR) constitute a propeptide, removed in mature form.

As to quaternary structure, interacts heterophilically through its MAM domain with proteins in axon-rich regions and through its Ig-like domains with proteins in differentiating muscle. In the embryonic brachial spinal cord, selectively expressed by medial lateral motor column neurons, some populations of dorsal root ganglion neurons, and interneurons.

The protein resides in the cell membrane. Required for radial migration of cortical neurons in the superficial layer of the neocortex. The protein is MAM domain-containing glycosylphosphatidylinositol anchor protein 1 of Gallus gallus (Chicken).